The primary structure comprises 364 residues: PDZ and LIM domain protein 3 (364 aa).

The 84-residue stretch at 1–84 (MPQTVILPGP…QLCLKIDRGE (84 aa)) folds into the PDZ domain. Phosphoserine is present on residues serine 18, serine 93, and serine 264. In terms of domain architecture, LIM zinc-binding spans 292–351 (PLCDKCGSGIVGAVVKARDKYRHPECFVCADCNLNLKQKGYFFIEGELYCETHARARTKP).

As to quaternary structure, interacts with ACTN2. Forms a heterodimer with PDLIM4 (via LIM domain). Isoform 1 is highly expressed in differentiated skeletal muscle. Isoform 2 is heart-specific.

It localises to the cytoplasm. Its subcellular location is the myofibril. The protein localises to the sarcomere. The protein resides in the z line. Its function is as follows. May play a role in the organization of actin filament arrays within muscle cells. The sequence is that of PDZ and LIM domain protein 3 (PDLIM3) from Homo sapiens (Human).